We begin with the raw amino-acid sequence, 567 residues long: Urease subunit alpha (567 aa).

The Urease domain occupies 130–567; sequence GGIDTHIHFI…LPLAQRYFLF (438 aa). 3 residues coordinate Ni(2+): His-135, His-137, and Lys-218. At Lys-218 the chain carries N6-carboxylysine. His-220 serves as a coordination point for substrate. Ni(2+) contacts are provided by His-247 and His-273. The active-site Proton donor is His-321. Asp-361 is a Ni(2+) binding site.

It belongs to the metallo-dependent hydrolases superfamily. Urease alpha subunit family. As to quaternary structure, heterotrimer of UreA (gamma), UreB (beta) and UreC (alpha) subunits. Three heterotrimers associate to form the active enzyme. Ni cation serves as cofactor. Carboxylation allows a single lysine to coordinate two nickel ions.

The protein localises to the cytoplasm. It carries out the reaction urea + 2 H2O + H(+) = hydrogencarbonate + 2 NH4(+). The protein operates within nitrogen metabolism; urea degradation; CO(2) and NH(3) from urea (urease route): step 1/1. In Methylobacillus flagellatus (strain ATCC 51484 / DSM 6875 / VKM B-1610 / KT), this protein is Urease subunit alpha.